A 277-amino-acid polypeptide reads, in one-letter code: E3 ubiquitin-protein ligase CCNB1IP1 (277 aa).

The RING-type; atypical zinc-finger motif lies at 4-51 (CEDMLLCNYRKCRIKLSGYAWVTACSHIFCDQHGSGEFSRSPAICPAC). A coiled-coil region spans residues 127-182 (QQIQSKDVELTSMKGEVTSMKKVLEEYKKKFSDISEKLMERNRQYQKLQGLYDSLR).

Interacts with CCNB1, UBE2L3 and NF2. Ubiquitinated; autoubiquitinated. In terms of processing, phosphorylated by CDK1 on serine or threonine residues (in vitro). Highly expressed in heart. Detected at intermediate levels in liver and kidney, and at low levels in placenta, brain and lung.

The protein resides in the nucleus. The protein localises to the chromosome. It catalyses the reaction S-ubiquitinyl-[E2 ubiquitin-conjugating enzyme]-L-cysteine + [acceptor protein]-L-lysine = [E2 ubiquitin-conjugating enzyme]-L-cysteine + N(6)-ubiquitinyl-[acceptor protein]-L-lysine.. The protein operates within protein modification; protein ubiquitination. Its function is as follows. Ubiquitin E3 ligase that acts as a limiting factor for crossing-over during meiosis: required during zygonema to limit the colocalization of RNF212 with MutS-gamma-associated recombination sites and thereby establish early differentiation of crossover and non-crossover sites. Later, it is directed by MutL-gamma to stably accumulate at designated crossover sites. Probably promotes the dissociation of RNF212 and MutS-gamma to allow the progression of recombination and the implementation of the final steps of crossing over. Modulates cyclin-B levels and participates in the regulation of cell cycle progression through the G2 phase. Overexpression causes delayed entry into mitosis. The polypeptide is E3 ubiquitin-protein ligase CCNB1IP1 (CCNB1IP1) (Homo sapiens (Human)).